The primary structure comprises 151 residues: Chaperonin GroEL (151 aa).

41–45 (DGTTT) is a binding site for ATP.

It belongs to the chaperonin (HSP60) family. Forms a cylinder of 14 subunits composed of two heptameric rings stacked back-to-back. Interacts with the co-chaperonin GroES.

The protein resides in the cytoplasm. It carries out the reaction ATP + H2O + a folded polypeptide = ADP + phosphate + an unfolded polypeptide.. In terms of biological role, together with its co-chaperonin GroES, plays an essential role in assisting protein folding. The GroEL-GroES system forms a nano-cage that allows encapsulation of the non-native substrate proteins and provides a physical environment optimized to promote and accelerate protein folding. The chain is Chaperonin GroEL from Mycobacterium avium.